Consider the following 205-residue polypeptide: Ribonuclease HII (205 aa).

Residues 15 to 205 (SQVCGIDEAG…SFKLRKLGEK (191 aa)) enclose the RNase H type-2 domain. Positions 21, 22, and 117 each coordinate a divalent metal cation.

This sequence belongs to the RNase HII family. The cofactor is Mn(2+). Mg(2+) serves as cofactor.

It is found in the cytoplasm. The catalysed reaction is Endonucleolytic cleavage to 5'-phosphomonoester.. Endonuclease that specifically degrades the RNA of RNA-DNA hybrids. This Chlorobaculum tepidum (strain ATCC 49652 / DSM 12025 / NBRC 103806 / TLS) (Chlorobium tepidum) protein is Ribonuclease HII.